The following is a 342-amino-acid chain: Phosphate acyltransferase (342 aa).

This sequence belongs to the PlsX family. In terms of assembly, homodimer. Probably interacts with PlsY.

It localises to the cytoplasm. The enzyme catalyses a fatty acyl-[ACP] + phosphate = an acyl phosphate + holo-[ACP]. It functions in the pathway lipid metabolism; phospholipid metabolism. In terms of biological role, catalyzes the reversible formation of acyl-phosphate (acyl-PO(4)) from acyl-[acyl-carrier-protein] (acyl-ACP). This enzyme utilizes acyl-ACP as fatty acyl donor, but not acyl-CoA. The chain is Phosphate acyltransferase from Legionella pneumophila (strain Corby).